Consider the following 63-residue polypeptide: Anaphase-promoting complex subunit 13 (63 aa).

Residues 36–63 (KTDDTEETNQETQQADAETWRDLALDTQ) are disordered. The segment covering 53 to 63 (ETWRDLALDTQ) has biased composition (basic and acidic residues).

The protein belongs to the APC13 family. As to quaternary structure, component of the anaphase promoting complex/cyclosome (APC/C) complex. In terms of tissue distribution, expressed constitutively in roots, leaves, stems, buds, flowers, and seeds.

It is found in the nucleus. It functions in the pathway protein modification; protein ubiquitination. In terms of biological role, component of the anaphase promoting complex/cyclosome (APC/C), a cell cycle-regulated E3 ubiquitin ligase that controls progression through mitosis and the G1 phase of the cell cycle. The APC/C complex acts by mediating ubiquitination and subsequent degradation of target proteins. Regulates global growth and development, including phyllotaxis and apical dominance. Required for pollen maturation. Promotes (pri) miRNA transcription of each MIR159 genes. This chain is Anaphase-promoting complex subunit 13, found in Arabidopsis thaliana (Mouse-ear cress).